We begin with the raw amino-acid sequence, 282 residues long: Energy-coupling factor transporter ATP-binding protein EcfA1 (282 aa).

In terms of domain architecture, ABC transporter spans 6–243; it reads ISFDHVTFTY…VEMLKRIGLD (238 aa). 40–47 lines the ATP pocket; that stretch reads GHNGSGKS.

The protein belongs to the ABC transporter superfamily. Energy-coupling factor EcfA family. Forms a stable energy-coupling factor (ECF) transporter complex composed of 2 membrane-embedded substrate-binding proteins (S component), 2 ATP-binding proteins (A component) and 2 transmembrane proteins (T component).

It localises to the cell membrane. Its function is as follows. ATP-binding (A) component of a common energy-coupling factor (ECF) ABC-transporter complex. Unlike classic ABC transporters this ECF transporter provides the energy necessary to transport a number of different substrates. The protein is Energy-coupling factor transporter ATP-binding protein EcfA1 of Lactobacillus delbrueckii subsp. bulgaricus (strain ATCC BAA-365 / Lb-18).